A 214-amino-acid chain; its full sequence is Uridine kinase (214 aa).

Residue 15 to 22 participates in ATP binding; sequence GASASGKS.

This sequence belongs to the uridine kinase family.

The protein resides in the cytoplasm. The enzyme catalyses uridine + ATP = UMP + ADP + H(+). The catalysed reaction is cytidine + ATP = CMP + ADP + H(+). Its pathway is pyrimidine metabolism; CTP biosynthesis via salvage pathway; CTP from cytidine: step 1/3. It functions in the pathway pyrimidine metabolism; UMP biosynthesis via salvage pathway; UMP from uridine: step 1/1. In Tolumonas auensis (strain DSM 9187 / NBRC 110442 / TA 4), this protein is Uridine kinase.